The primary structure comprises 227 residues: ATP-dependent dethiobiotin synthetase BioD (227 aa).

Residue 13 to 18 (DIGKTY) participates in ATP binding. Thr17 is a binding site for Mg(2+). Lys38 is a catalytic residue. Ser42 provides a ligand contact to substrate. ATP is bound by residues Asp55, 116–119 (EGSG), and 179–180 (NN). 2 residues coordinate Mg(2+): Asp55 and Glu116.

The protein belongs to the dethiobiotin synthetase family. Homodimer. It depends on Mg(2+) as a cofactor.

It is found in the cytoplasm. The catalysed reaction is (7R,8S)-7,8-diammoniononanoate + CO2 + ATP = (4R,5S)-dethiobiotin + ADP + phosphate + 3 H(+). The protein operates within cofactor biosynthesis; biotin biosynthesis; biotin from 7,8-diaminononanoate: step 1/2. Catalyzes a mechanistically unusual reaction, the ATP-dependent insertion of CO2 between the N7 and N8 nitrogen atoms of 7,8-diaminopelargonic acid (DAPA, also called 7,8-diammoniononanoate) to form a ureido ring. The polypeptide is ATP-dependent dethiobiotin synthetase BioD (Clostridium botulinum (strain Kyoto / Type A2)).